The primary structure comprises 291 residues: Small ribosomal subunit protein uS2 (291 aa).

Residues Asn235 to Lys291 are disordered. Over residues Ser270–Lys291 the composition is skewed to acidic residues.

This sequence belongs to the universal ribosomal protein uS2 family.

This is Small ribosomal subunit protein uS2 from Treponema denticola (strain ATCC 35405 / DSM 14222 / CIP 103919 / JCM 8153 / KCTC 15104).